The sequence spans 221 residues: Chalcone--flavanone isomerase (221 aa).

T52, N117, and S193 together coordinate substrate.

It belongs to the chalcone isomerase family. Flowers.

The enzyme catalyses a chalcone = a flavanone.. It functions in the pathway secondary metabolite biosynthesis; flavonoid biosynthesis. Catalyzes the intramolecular cyclization of bicyclic chalcones into tricyclic (S)-flavanones. Responsible for the isomerization of 4,2',4',6'-tetrahydroxychalcone (also termed chalcone) into naringenin. The polypeptide is Chalcone--flavanone isomerase (CHI) (Gentiana triflora (Clustered gentian)).